The chain runs to 334 residues: Cytoskeleton protein RodZ (334 aa).

At Met1–Gly111 the chain is on the cytoplasmic side. The region spanning Leu19–Leu71 is the HTH cro/C1-type domain. A DNA-binding region (H-T-H motif) is located at residues Gln30–Glu49. A helical; Signal-anchor for type II membrane protein transmembrane segment spans residues Trp112–Trp132. Over Trp133 to Gln334 the chain is Periplasmic. Positions Asn155–Gly241 are disordered. Composition is skewed to low complexity over residues Ala170–Ala211 and Thr219–Gly241.

This sequence belongs to the RodZ family.

The protein resides in the cell inner membrane. Its function is as follows. Cytoskeletal protein that is involved in cell-shape control through regulation of the length of the long axis. This chain is Cytoskeleton protein RodZ, found in Salmonella agona (strain SL483).